The following is a 549-amino-acid chain: Glucose-6-phosphate isomerase (549 aa).

3 positions are modified to N6-acetyllysine: K80, K228, and K234. The Proton donor role is filled by E355. Residues H386 and K514 contribute to the active site.

It belongs to the GPI family.

The protein resides in the cytoplasm. It carries out the reaction alpha-D-glucose 6-phosphate = beta-D-fructose 6-phosphate. It functions in the pathway carbohydrate biosynthesis; gluconeogenesis. Its pathway is carbohydrate degradation; glycolysis; D-glyceraldehyde 3-phosphate and glycerone phosphate from D-glucose: step 2/4. Functionally, catalyzes the reversible isomerization of glucose-6-phosphate to fructose-6-phosphate. This is Glucose-6-phosphate isomerase from Escherichia coli O17:K52:H18 (strain UMN026 / ExPEC).